We begin with the raw amino-acid sequence, 543 residues long: EH domain-containing protein 2 (543 aa).

Residues Ser3 and Ser44 each carry the phosphoserine modification. Residues 55–286 enclose the Dynamin-type G domain; the sequence is FDGKPMVLVA…DLFRDIQGLP (232 aa). Residues 65 to 72 are G1 motif; sequence GQYSTGKT. Residue 65–72 participates in ATP binding; that stretch reads GQYSTGKT. Residues 91–92 form a G2 motif region; it reads EP. Residues 153–156 are G3 motif; sequence DTPG. The tract at residues 219 to 222 is G4 motif; the sequence is NKAD. Lys220 lines the ATP pocket. Position 243 (Val243) is a region of interest, G5 motif. Trp258 is an ATP binding site. The tract at residues 320 to 340 is mediates membrane-binding; sequence SVFGKENKKKQLIFKLPVIFA. A phosphoserine mark is found at Ser438, Ser468, Ser470, Ser484, and Ser493. Residues 449–537 form the EH domain; that stretch reads DKSKYDEIFY…RRLVPPSKRR (89 aa). Positions 481 to 516 constitute an EF-hand domain; the sequence is LPNSVLGRIWKLSDVDRDGMLDDEEFALASHLIEAK. Ca(2+) is bound by residues Asp494, Asp496, Asp498, Met500, and Glu505. The segment at 521-543 is disordered; it reads GLPTNLPRRLVPPSKRRQKGSAE. Basic residues predominate over residues 534 to 543; the sequence is SKRRQKGSAE.

The protein belongs to the TRAFAC class dynamin-like GTPase superfamily. Dynamin/Fzo/YdjA family. EHD subfamily. In terms of assembly, homodimer and homooligomer. Interacts with EHD1. May also interact with EHD3 and EHD4. Interacts with MYOF. Interacts with EHBP1. Interacts with FER1L5 (via second C2 domain). Interacts with CAV1 in a cholesterol-dependent manner. Interacts (via EH domain) with PACSIN2 (via NPF motifs); this interaction probably stabilizes the caveolae.

Its subcellular location is the cell membrane. It is found in the membrane. The protein resides in the caveola. The protein localises to the endosome membrane. It localises to the cytoplasm. Its subcellular location is the cytosol. Its activity is regulated as follows. The very low intrinsic ATPase activity is increased upon interaction with liposomes. In terms of biological role, ATP- and membrane-binding protein that controls membrane reorganization/tubulation upon ATP hydrolysis. Plays a role in membrane trafficking between the plasma membrane and endosomes. Important for the internalization of GLUT4. Required for fusion of myoblasts to skeletal muscle myotubes. Required for normal translocation of FER1L5 to the plasma membrane. Regulates the equilibrium between cell surface-associated and cell surface-dissociated caveolae by constraining caveolae at the cell membrane. This chain is EH domain-containing protein 2, found in Rattus norvegicus (Rat).